A 309-amino-acid polypeptide reads, in one-letter code: tRNA pseudouridine synthase B (309 aa).

D39 serves as the catalytic Nucleophile. One can recognise a PUA domain in the interval 229–306; the sequence is LPRVVVHQES…ERVLTLRKVF (78 aa).

This sequence belongs to the pseudouridine synthase TruB family. Type 1 subfamily.

The catalysed reaction is uridine(55) in tRNA = pseudouridine(55) in tRNA. Responsible for synthesis of pseudouridine from uracil-55 in the psi GC loop of transfer RNAs. This Thermotoga maritima (strain ATCC 43589 / DSM 3109 / JCM 10099 / NBRC 100826 / MSB8) protein is tRNA pseudouridine synthase B.